Reading from the N-terminus, the 345-residue chain is MEDERGREHGGDAAQQKTPRPECEESRPLSVEKKQRCRLDGKDTDGSKFITSNGGDFSDPVYKEIAMTNGCINRMSKEELRAKLSEFKLETRGVKDVLKKRLKNYYKKQKLMLKESNAVDSYYDYICIIDFEATCEEGNPAEFLHEIIEFPVVLLNTHSLEIEDTFQQYVRPEVNSQLSEFCIGLTGITQDQVDRADAFPQVLKKVIEWMKSKELGTKYKYCILTDGSWDMSKFLNIQCQLSRLKYPSFAKKWINIRKSYGNFYKVPRSQTKLTIMLEKLGMDYDGRPHSGLDDSKNIARIAVRMLQDGCELRINEKLHGGQLMSVSSSLPVEGAPAPQMPHSRK.

2 stretches are compositionally biased toward basic and acidic residues: residues 1 to 11 (MEDERGREHGG) and 19 to 40 (PRPE…CRLD). Residues 1–40 (MEDERGREHGGDAAQQKTPRPECEESRPLSVEKKQRCRLD) form a disordered region. A Phosphoserine modification is found at Ser58. In terms of domain architecture, SAP spans 72-106 (INRMSKEELRAKLSEFKLETRGVKDVLKKRLKNYY). Residues 126–302 (ICIIDFEATC…DDSKNIARIA (177 aa)) enclose the Exonuclease domain. The Mg(2+) site is built by Asp130 and Glu132. The active-site Proton acceptor is the Glu132. AMP contacts are provided by Glu132 and Ala133. Asp230 serves as a coordination point for Mg(2+). His289 functions as the Proton acceptor in the catalytic mechanism. His289 lines the AMP pocket. Residue Asp294 participates in Mg(2+) binding.

In terms of assembly, identified in a histone pre-mRNA complex, at least composed of ERI1, LSM11, SLBP, SNRPB, SYNCRIP and YBX1. Binds to 40S and 60S ribosomal subunits and to 80S assembled ribosomes. Interacts in a cooperative manner with SLBP to the mature 3'-end of histone mRNAs. Found in a ternary complex with SLBP and the stem-loop structure of the 3'-end of histone mRNAs. The cofactor is Mg(2+).

It localises to the cytoplasm. It is found in the nucleus. Its subcellular location is the nucleolus. It carries out the reaction Exonucleolytic cleavage in the 3'- to 5'-direction to yield nucleoside 5'-phosphates.. Its activity is regulated as follows. Although it can bind simultaneously with SLBP to the 3'-end of histone mRNA, the presence of SLBP prevents the exonuclease activity. Its function is as follows. RNA exonuclease that binds to the 3'-end of histone mRNAs and degrades them, suggesting that it plays an essential role in histone mRNA decay after replication. A 2' and 3'-hydroxyl groups at the last nucleotide of the histone 3'-end is required for efficient 3'-end histone mRNA exonuclease activity and degradation of RNA substrates. Also able to degrade the 3'-overhangs of short interfering RNAs (siRNAs) in vitro, suggesting a possible role as regulator of RNA interference (RNAi). Required for binding the 5'-ACCCA-3' sequence present in stem-loop structure. Able to bind other mRNAs. Required for 5.8S rRNA 3'-end processing. Also binds to 5.8s ribosomal RNA. Binds with high affinity to the stem-loop structure of replication-dependent histone pre-mRNAs. In vitro, does not have sequence specificity. In vitro, has weak DNA exonuclease activity. In vitro, shows biphasic kinetics such that there is rapid hydrolysis of the last three unpaired RNA nucleotides in the 39 flanking sequence followed by a much slower cleavage through the stem that occurs over a longer incubation period in the order of hours. ERI1-mediated RNA metabolism plays a key role in chondrogenesis. The protein is 3'-5' exoribonuclease 1 (Eri1) of Rattus norvegicus (Rat).